Here is a 417-residue protein sequence, read N- to C-terminus: Serine hydroxymethyltransferase (417 aa).

Residues Leu121 and 125 to 127 (GHL) contribute to the (6S)-5,6,7,8-tetrahydrofolate site. Lys229 carries the post-translational modification N6-(pyridoxal phosphate)lysine. 355–357 (SPF) is a (6S)-5,6,7,8-tetrahydrofolate binding site.

This sequence belongs to the SHMT family. In terms of assembly, homodimer. Requires pyridoxal 5'-phosphate as cofactor.

It localises to the cytoplasm. The enzyme catalyses (6R)-5,10-methylene-5,6,7,8-tetrahydrofolate + glycine + H2O = (6S)-5,6,7,8-tetrahydrofolate + L-serine. It participates in one-carbon metabolism; tetrahydrofolate interconversion. It functions in the pathway amino-acid biosynthesis; glycine biosynthesis; glycine from L-serine: step 1/1. Functionally, catalyzes the reversible interconversion of serine and glycine with tetrahydrofolate (THF) serving as the one-carbon carrier. This reaction serves as the major source of one-carbon groups required for the biosynthesis of purines, thymidylate, methionine, and other important biomolecules. Also exhibits THF-independent aldolase activity toward beta-hydroxyamino acids, producing glycine and aldehydes, via a retro-aldol mechanism. The chain is Serine hydroxymethyltransferase from Shewanella frigidimarina (strain NCIMB 400).